Reading from the N-terminus, the 666-residue chain is Enzymatic polyprotein (666 aa).

Aspartate 54 is a catalytic residue. One can recognise a Reverse transcriptase domain in the interval glutamate 215–isoleucine 445.

It belongs to the caulimoviridae enzymatic polyprotein family.

The catalysed reaction is DNA(n) + a 2'-deoxyribonucleoside 5'-triphosphate = DNA(n+1) + diphosphate. Encodes for at least two polypeptides: protease (PR) and reverse transcriptase (RT). The protease processes the polyprotein in cis. Reverse transcriptase is multifunctional enzyme that converts the viral RNA genome into dsDNA in viral cytoplasmic capsids. This enzyme displays a DNA polymerase activity that can copy either DNA or RNA templates, and a ribonuclease H (RNase H) activity that cleaves the RNA strand of RNA-DNA heteroduplexes in a partially processive 3'- to 5'-endonucleasic mode. Neo-synthesized pregenomic RNA (pgRNA) are encapsidated, and reverse-transcribed inside the nucleocapsid. Partial (+)DNA is synthesized from the (-)DNA template and generates the relaxed circular DNA (RC-DNA) genome. After budding and infection, the RC-DNA migrates in the nucleus, and is converted into a plasmid-like covalently closed circular DNA (cccDNA). The protein is Enzymatic polyprotein of Figwort mosaic virus (strain DxS) (FMV).